A 250-amino-acid chain; its full sequence is Ribosomal RNA small subunit methyltransferase J (250 aa).

Residues 101-102 (RD), 117-118 (ER), 153-154 (SS), and Asp171 contribute to the S-adenosyl-L-methionine site.

Belongs to the methyltransferase superfamily. RsmJ family.

It is found in the cytoplasm. The enzyme catalyses guanosine(1516) in 16S rRNA + S-adenosyl-L-methionine = N(2)-methylguanosine(1516) in 16S rRNA + S-adenosyl-L-homocysteine + H(+). Functionally, specifically methylates the guanosine in position 1516 of 16S rRNA. The polypeptide is Ribosomal RNA small subunit methyltransferase J (Escherichia coli (strain UTI89 / UPEC)).